Here is an 89-residue protein sequence, read N- to C-terminus: Large ribosomal subunit protein eL34 (89 aa).

Positions 41–69 are disordered; it reads RPLNGVPRGRPSELRKLPKTAKRPERPYP. Residues 50 to 66 show a composition bias toward basic and acidic residues; the sequence is RPSELRKLPKTAKRPER.

Belongs to the eukaryotic ribosomal protein eL34 family.

This chain is Large ribosomal subunit protein eL34, found in Thermococcus gammatolerans (strain DSM 15229 / JCM 11827 / EJ3).